A 327-amino-acid chain; its full sequence is MKEIKLNSDSLEIYEKSASKKLNRNDLIDLWNLDLNDLLDISYALKKLFNKDKIDLCSIMNAKSGICPENCIFCSQSKHNSSKIDTYELKSKEEILKNAKSVEKYSNRFSIVVSGKTVTDLEFEKIIESIEEIQNKTKLKVCVSLGLLNKDQLKALNEKNVRIHNNLETSENYFKNICTTHDYNDKIKVILEAKKIGLEMCSGGIFGMGESIDDRINLFLDLKKLGVDSIALNLLNPIYGTKIYDRINSGDISPINSIGALKSLCIARITLPNKVIRLCGGREHVLKDMQKYSLLAIDGLMIGNYLTTNGQNIQSDLKMIEEMGFER.

Residues 49 to 282 (FNKDKIDLCS…NKVIRLCGGR (234 aa)) enclose the Radical SAM core domain. [4Fe-4S] cluster-binding residues include Cys-67, Cys-71, and Cys-74. [2Fe-2S] cluster is bound by residues Ser-110, Cys-142, Cys-201, and Arg-277.

Belongs to the radical SAM superfamily. Biotin synthase family. In terms of assembly, homodimer. [4Fe-4S] cluster is required as a cofactor. Requires [2Fe-2S] cluster as cofactor.

The catalysed reaction is (4R,5S)-dethiobiotin + (sulfur carrier)-SH + 2 reduced [2Fe-2S]-[ferredoxin] + 2 S-adenosyl-L-methionine = (sulfur carrier)-H + biotin + 2 5'-deoxyadenosine + 2 L-methionine + 2 oxidized [2Fe-2S]-[ferredoxin]. It functions in the pathway cofactor biosynthesis; biotin biosynthesis; biotin from 7,8-diaminononanoate: step 2/2. Functionally, catalyzes the conversion of dethiobiotin (DTB) to biotin by the insertion of a sulfur atom into dethiobiotin via a radical-based mechanism. This Methanococcus maripaludis (strain C5 / ATCC BAA-1333) protein is Biotin synthase.